We begin with the raw amino-acid sequence, 316 residues long: Acetyl-coenzyme A carboxylase carboxyl transferase subunit alpha (316 aa).

One can recognise a CoA carboxyltransferase C-terminal domain in the interval 39–293; that stretch reads RLQDKSKALT…RGELLTQLKM (255 aa).

This sequence belongs to the AccA family. Acetyl-CoA carboxylase is a heterohexamer composed of biotin carboxyl carrier protein (AccB), biotin carboxylase (AccC) and two subunits each of ACCase subunit alpha (AccA) and ACCase subunit beta (AccD).

It localises to the cytoplasm. It carries out the reaction N(6)-carboxybiotinyl-L-lysyl-[protein] + acetyl-CoA = N(6)-biotinyl-L-lysyl-[protein] + malonyl-CoA. Its pathway is lipid metabolism; malonyl-CoA biosynthesis; malonyl-CoA from acetyl-CoA: step 1/1. Component of the acetyl coenzyme A carboxylase (ACC) complex. First, biotin carboxylase catalyzes the carboxylation of biotin on its carrier protein (BCCP) and then the CO(2) group is transferred by the carboxyltransferase to acetyl-CoA to form malonyl-CoA. The polypeptide is Acetyl-coenzyme A carboxylase carboxyl transferase subunit alpha (Pseudomonas aeruginosa (strain LESB58)).